The primary structure comprises 311 residues: Heme A synthase (311 aa).

Residues 1–6 (MQRFIK) lie on the Cytoplasmic side of the membrane. A helical membrane pass occupies residues 7 to 27 (WLAVITSLDLLIVLLGGALVT). Residues 28 to 62 (KTGSGQGCGKSWPLCNGEFVPSNLSMETIIELSHR) lie on the Extracellular side of the membrane. Cysteines 35 and 42 form a disulfide. Residue Glu58 is part of the active site. Residue His61 participates in heme o binding. A helical transmembrane segment spans residues 63 to 83 (LTSGSAGILVTLLCILSWKYY). At 84–91 (KHVRETKT) the chain is on the cytoplasmic side. A helical transmembrane segment spans residues 92-112 (LAILSFVFLVAQALMGAAAVV). Topologically, residues 113–121 (WGQMPAVLA) are extracellular. A helical transmembrane segment spans residues 122–142 (IHFGISLISFASVILLTCLIF). His123 is a heme o binding site. The Cytoplasmic segment spans residues 143-159 (EIDQKFDARSLIMDKKM). The helical transmembrane segment at 160–180 (KFHIYGVTIYSYIVVYTGALV) threads the bilayer. The Extracellular segment spans residues 181–211 (RHERASLACPDFPLCSKNRPMPTQLHEWVQM). Cys189 and Cys195 are joined by a disulfide. Residues 212 to 232 (GHRVAAMLIFAWILYAMILAI) form a helical membrane-spanning segment. His213 contacts heme b. The Cytoplasmic portion of the chain corresponds to 233-243 (RHYKQQPVVYW). Residues 244 to 264 (GWIISFILVTLQAIVGILVVF) form a helical membrane-spanning segment. Residues 265–271 (TNASLSM) lie on the Extracellular side of the membrane. The chain crosses the membrane as a helical span at residues 272 to 292 (ALLHSLFISCLFAVLCYLVML). His275 provides a ligand contact to heme b. Topologically, residues 293–311 (GTRSKVNAKEAASTSKQTK) are cytoplasmic.

This sequence belongs to the COX15/CtaA family. Type 1 subfamily. In terms of assembly, interacts with CtaB. Heme b is required as a cofactor.

Its subcellular location is the cell membrane. The catalysed reaction is Fe(II)-heme o + 2 A + H2O = Fe(II)-heme a + 2 AH2. The protein operates within porphyrin-containing compound metabolism; heme A biosynthesis; heme A from heme O: step 1/1. Functionally, catalyzes the conversion of heme O to heme A by two successive hydroxylations of the methyl group at C8. The first hydroxylation forms heme I, the second hydroxylation results in an unstable dihydroxymethyl group, which spontaneously dehydrates, resulting in the formyl group of heme A. The chain is Heme A synthase from Bacillus cereus (strain ATCC 10987 / NRS 248).